We begin with the raw amino-acid sequence, 408 residues long: Phosphoglycerate kinase (408 aa).

Substrate-binding positions include 28-30 (DIN), Arg43, 66-69 (HQGR), Arg123, and Arg163. ATP contacts are provided by residues Glu334 and 358 to 361 (GGHT).

The protein belongs to the phosphoglycerate kinase family. Monomer.

It localises to the cytoplasm. It carries out the reaction (2R)-3-phosphoglycerate + ATP = (2R)-3-phospho-glyceroyl phosphate + ADP. It participates in carbohydrate degradation; glycolysis; pyruvate from D-glyceraldehyde 3-phosphate: step 2/5. The polypeptide is Phosphoglycerate kinase (Pyrobaculum aerophilum (strain ATCC 51768 / DSM 7523 / JCM 9630 / CIP 104966 / NBRC 100827 / IM2)).